The primary structure comprises 425 residues: Glyco-Gag protein (425 aa).

Residues 1–54 are Cytoplasmic-facing; that stretch reads MSRASSGTATGARLFGISSVLGEYRVLIGDEGAGPSRSPSEVSFSVWYRSRAAR. The chain crosses the membrane as a helical span at residues 55–75; the sequence is LVIVCLVASFLVPCLTFLIAE. Over 76–425 the chain is Extracellular; it reads TVMGQTITTP…VVQGKEETPA (350 aa). An N-linked (GlcNAc...) asparagine; by host glycan is attached at N137. Residues 174–285 are disordered; it reads VRPFLPPPKP…LREGPNNRPQ (112 aa). Pro residues predominate over residues 177 to 196; sequence FLPPPKPPTSLPQPLSPQPS. Residues 197–209 are compositionally biased toward low complexity; it reads APLTSSLYPVLPK. Composition is skewed to pro residues over residues 213-223 and 233-248; these read PKPPVLPPDPS and EPPP…PSGP.

Glycosylated by host. Post-translationally, cleaved by host near the middle of the molecule, releasing the c-terminal half containing capsid and nucleoprotein domains op GAG.

The protein resides in the host cell membrane. Its function is as follows. Plays a role in viral particle release. Presumably acts by facilitating the fission of the virion bud at the cell surface. This Felidae (cat family) protein is Glyco-Gag protein.